The chain runs to 258 residues: Glutamate racemase (258 aa).

Residues 11-12 (DS) and 43-44 (YG) each bind substrate. The Proton donor/acceptor role is filled by C74. A substrate-binding site is contributed by 75–76 (NT). Catalysis depends on C187, which acts as the Proton donor/acceptor. 188–189 (TH) contributes to the substrate binding site.

It belongs to the aspartate/glutamate racemases family.

The catalysed reaction is L-glutamate = D-glutamate. The protein operates within cell wall biogenesis; peptidoglycan biosynthesis. Functionally, provides the (R)-glutamate required for cell wall biosynthesis. This is Glutamate racemase from Bifidobacterium animalis subsp. lactis (strain AD011).